A 301-amino-acid polypeptide reads, in one-letter code: Methionyl-tRNA formyltransferase (301 aa).

(6S)-5,6,7,8-tetrahydrofolate is bound at residue 109–112; it reads SLLP.

The protein belongs to the Fmt family.

The enzyme catalyses L-methionyl-tRNA(fMet) + (6R)-10-formyltetrahydrofolate = N-formyl-L-methionyl-tRNA(fMet) + (6S)-5,6,7,8-tetrahydrofolate + H(+). Attaches a formyl group to the free amino group of methionyl-tRNA(fMet). The formyl group appears to play a dual role in the initiator identity of N-formylmethionyl-tRNA by promoting its recognition by IF2 and preventing the misappropriation of this tRNA by the elongation apparatus. This is Methionyl-tRNA formyltransferase from Anaplasma marginale (strain St. Maries).